Reading from the N-terminus, the 181-residue chain is MHESQKKRWYVLQAFSGFESRVAQSIREHVKLNQMEDLFGEVMVPSQEVVEIRGGQRRKSEYKFFPGYVLIQMKMTDSTWHLIRNVPKVLGFIGGKSDKPSPISDKEVEIIINRLRKIGNKPRPKTLFEPGEMIRVNDGPFADFNGVVEEVDYEKSRLKVSVSIFGRSTPVELDFRQVEKN.

In terms of domain architecture, KOW spans Pro-130–Ser-161.

Belongs to the NusG family. Monomer. Interacts with the transcription termination factor Rho and with RNA polymerase.

Functionally, participates in transcription elongation, termination and antitermination. In the absence of Rho, increases the rate of transcription elongation by the RNA polymerase (RNAP), probably by partially suppressing pausing. In the presence of Rho, modulates most Rho-dependent termination events by interacting with the RNAP to render the complex more susceptible to the termination activity of Rho. May be required to overcome a kinetic limitation of Rho to function at certain terminators. Also involved in ribosomal RNA transcriptional antitermination. The chain is Transcription termination/antitermination protein NusG from Buchnera aphidicola subsp. Acyrthosiphon pisum (strain APS) (Acyrthosiphon pisum symbiotic bacterium).